A 226-amino-acid chain; its full sequence is MDLDADFLLLHLSDSALPTGAFAHSFGFETYMDAERITNAEEFQDWLKVLLKVQLTSSDALAMRMFYATPTASELKRLDERLFAGTPAREVREANARMGTRMAEIVAETYSVPLIIEYLELIKNRELSGHPALALALATHSMGIDVDRAIHAHLTATVSSLIQNAVRGIPLGQMAGQRVMFAMREHIGAAVKRSAMLDAIDFCSGDPGLDISQMVHETQRARLFMS.

This sequence belongs to the UreF family. UreD, UreF and UreG form a complex that acts as a GTP-hydrolysis-dependent molecular chaperone, activating the urease apoprotein by helping to assemble the nickel containing metallocenter of UreC. The UreE protein probably delivers the nickel.

The protein localises to the cytoplasm. Functionally, required for maturation of urease via the functional incorporation of the urease nickel metallocenter. This is Urease accessory protein UreF from Corynebacterium glutamicum (strain R).